Consider the following 173-residue polypeptide: CASP-like protein 3A1 (173 aa).

A topological domain (cytoplasmic) is located at residue M1. A helical membrane pass occupies residues 2–22; the sequence is VDIALRSAVVAFMVVSLSAMF. Residues 23-48 lie on the Extracellular side of the membrane; that stretch reads TSTQHSEVHIIGFSIPVSLRWNRSQP. Residue N44 is glycosylated (N-linked (GlcNAc...) asparagine). Residues 49–69 form a helical membrane-spanning segment; it reads FEFLVVVELLICAYAFVQFVY. At 70 to 84 the chain is on the cytoplasmic side; that stretch reads QSVVLAKNAVPTRRC. A helical membrane pass occupies residues 85–105; the sequence is IWVQLAADQVCAYLVLAAAAA. Residues 106 to 140 are Extracellular-facing; that stretch reads AAGASRTNKSGFQSLGMQNIKVPGVCIVLDKFCNR. The N-linked (GlcNAc...) asparagine glycan is linked to N113. The chain crosses the membrane as a helical span at residues 141–161; it reads ATIAIIFTLLAAGASGISVTL. Residues 162–173 are Cytoplasmic-facing; it reads DVYMLTLTYYMG.

Belongs to the Casparian strip membrane proteins (CASP) family. Homodimer and heterodimers.

The protein localises to the cell membrane. This Pteridium aquilinum subsp. aquilinum (Bracken fern) protein is CASP-like protein 3A1.